The following is a 112-amino-acid chain: Nucleoid-associated protein CV_1611 (112 aa).

The protein belongs to the YbaB/EbfC family. Homodimer.

It is found in the cytoplasm. The protein resides in the nucleoid. Functionally, binds to DNA and alters its conformation. May be involved in regulation of gene expression, nucleoid organization and DNA protection. In Chromobacterium violaceum (strain ATCC 12472 / DSM 30191 / JCM 1249 / CCUG 213 / NBRC 12614 / NCIMB 9131 / NCTC 9757 / MK), this protein is Nucleoid-associated protein CV_1611.